A 547-amino-acid polypeptide reads, in one-letter code: MAKEIRFGEKARRSLEAGVNKLADTVKVTLGPKGRNVVIDKKFGSPLITNDGVTIAREIELEDAYENMGAQLVKEVATKTNDVAGDGTTTATLLAQAIIREGLKNVAAGANPMIIKKGIHKAVDAAVAELKAVSKSIESKEAIAQVGAISAADEEIGQLIADAMDKVGKDGVITVEESKSMGTTLDVVEGMQFDRGYLSPYMVTDTEKMEAVFNDAYILVTDKKISNIQEILPILEQIVQQGKKLVIIAEDIEGEALATLVVNKLRGTFECVAVKAPGFGDRRKSMLDDIAVLTGATVISEELGYDLKTATVDMLGTARTVKVDKENTTIVEGAGNQQLIKDRVSQIKKQIEETTSDFDKEKLQERLAKLSGGVAVIQVGAATETELKERKLRIEDALNATRAAVEEGIVAGGGTALVNVIPAVEALLEGSQGDEKTGIQIIRRALEEPLRQIAENAGLEGSVIVNKVMSSDKGIGYDVLNNKYVNMIEAGIVDPTKVTRSALQNAASISAMLLTTESAVVDIASEEPGMPGGMGGMGGMGGGMPMM.

ATP contacts are provided by residues 29–32, 86–90, Gly-413, 478–480, and Asp-494; these read TLGP, DGTTT, and DVL.

Belongs to the chaperonin (HSP60) family. As to quaternary structure, forms a cylinder of 14 subunits composed of two heptameric rings stacked back-to-back. Interacts with the co-chaperonin GroES.

The protein localises to the cytoplasm. The enzyme catalyses ATP + H2O + a folded polypeptide = ADP + phosphate + an unfolded polypeptide.. In terms of biological role, together with its co-chaperonin GroES, plays an essential role in assisting protein folding. The GroEL-GroES system forms a nano-cage that allows encapsulation of the non-native substrate proteins and provides a physical environment optimized to promote and accelerate protein folding. The chain is Chaperonin GroEL from Alkaliphilus metalliredigens (strain QYMF).